The primary structure comprises 363 residues: Aminomethyltransferase (363 aa).

Belongs to the GcvT family. In terms of assembly, the glycine cleavage system is composed of four proteins: P, T, L and H.

The enzyme catalyses N(6)-[(R)-S(8)-aminomethyldihydrolipoyl]-L-lysyl-[protein] + (6S)-5,6,7,8-tetrahydrofolate = N(6)-[(R)-dihydrolipoyl]-L-lysyl-[protein] + (6R)-5,10-methylene-5,6,7,8-tetrahydrofolate + NH4(+). Its function is as follows. The glycine cleavage system catalyzes the degradation of glycine. This chain is Aminomethyltransferase, found in Staphylococcus haemolyticus (strain JCSC1435).